Consider the following 156-residue polypeptide: ATP synthase subunit b (156 aa).

A helical membrane pass occupies residues 7 to 27; the sequence is LIGQLIAFAIFVAFCMKFVWP.

Belongs to the ATPase B chain family. In terms of assembly, F-type ATPases have 2 components, F(1) - the catalytic core - and F(0) - the membrane proton channel. F(1) has five subunits: alpha(3), beta(3), gamma(1), delta(1), epsilon(1). F(0) has three main subunits: a(1), b(2) and c(10-14). The alpha and beta chains form an alternating ring which encloses part of the gamma chain. F(1) is attached to F(0) by a central stalk formed by the gamma and epsilon chains, while a peripheral stalk is formed by the delta and b chains.

The protein localises to the cell inner membrane. Functionally, f(1)F(0) ATP synthase produces ATP from ADP in the presence of a proton or sodium gradient. F-type ATPases consist of two structural domains, F(1) containing the extramembraneous catalytic core and F(0) containing the membrane proton channel, linked together by a central stalk and a peripheral stalk. During catalysis, ATP synthesis in the catalytic domain of F(1) is coupled via a rotary mechanism of the central stalk subunits to proton translocation. Its function is as follows. Component of the F(0) channel, it forms part of the peripheral stalk, linking F(1) to F(0). This Pasteurella multocida (strain Pm70) protein is ATP synthase subunit b.